The chain runs to 79 residues: MKPIYARYPEVRMRWFDAEAFSARCSDVAMFETESVPAFYYLIDALRDSPLMTEPYFEFVDIIPAVEDGFRDYDAQLAQ.

Belongs to the darcynin family.

The polypeptide is Darcynin (Chromobacterium violaceum (strain ATCC 12472 / DSM 30191 / JCM 1249 / CCUG 213 / NBRC 12614 / NCIMB 9131 / NCTC 9757 / MK)).